The primary structure comprises 549 residues: Putative lipase ATG15 (549 aa).

Over 1–19 the chain is Cytoplasmic; sequence MKQDLYKESSPPPSTTKSK. The helical; Signal-anchor for type II membrane protein transmembrane segment at 20-42 threads the bilayer; the sequence is GLYVIVAALVTTAIYLLYSQGYS. Over 43–549 the chain is Lumenal; that stretch reads NTHGEKDMPS…SHTVTHVTMA (507 aa). Asparagine 204 and asparagine 315 each carry an N-linked (GlcNAc...) asparagine glycan. Catalysis depends on serine 331, which acts as the Charge relay system. Asparagine 448 carries an N-linked (GlcNAc...) asparagine glycan. The segment at 474–510 is disordered; sequence DDDDKDKKKKKKTSTSSSVVSKTKTSTSSTVATNTMP. Low complexity predominate over residues 487 to 504; it reads STSSSVVSKTKTSTSSTV.

This sequence belongs to the AB hydrolase superfamily. Lipase family. Binds to both phosphatidylinositol (PI) and phosphatidylinositol 3,5-bisphosphate (PIP2).

It is found in the endosome. The protein resides in the multivesicular body membrane. Its subcellular location is the prevacuolar compartment membrane. It carries out the reaction a triacylglycerol + H2O = a diacylglycerol + a fatty acid + H(+). Its function is as follows. Lipase which is essential for lysis of subvacuolar cytoplasm to vacuole targeted bodies and intravacuolar autophagic bodies. Involved in the lysis of intravacuolar multivesicular body (MVB) vesicles. The intravacuolar membrane disintegration by ATG15 is critical to life span extension. This chain is Putative lipase ATG15 (ATG15), found in Yarrowia lipolytica (strain CLIB 122 / E 150) (Yeast).